The primary structure comprises 511 residues: Glutamate/gamma-aminobutyrate antiporter (511 aa).

Over 1-14 the chain is Cytoplasmic; the sequence is MATLVQTGKAKQLT. Residues 15 to 35 form a helical membrane-spanning segment; the sequence is LLGFFAITASMVMAVYEYPTF. The Periplasmic segment spans residues 36–41; that stretch reads ATSGFS. Residues 42-62 traverse the membrane as a helical segment; the sequence is LVFFLLLGGILWFIPVGLCAA. The Cytoplasmic segment spans residues 63-93; the sequence is EMATVDGWEEGGVFAWVSNTLGPRWGFAAIS. A helical transmembrane segment spans residues 94 to 114; it reads FGYLQIAIGFIPMLYFVLGAL. Topologically, residues 115–127 are periplasmic; the sequence is SYILKWPALNEDP. Residues 128 to 148 traverse the membrane as a helical segment; that stretch reads ITKTIAALIILWALALTQFGG. The Cytoplasmic portion of the chain corresponds to 149 to 157; it reads TKYTARIAK. Residues 158-178 traverse the membrane as a helical segment; that stretch reads VGFFAGILLPAFILIALAAIY. Over 179-200 the chain is Periplasmic; sequence LHSGAPVAIEMDSKTFFPDFSK. A helical transmembrane segment spans residues 201 to 221; sequence VGTLVVFVAFILSYMGVEASA. The Cytoplasmic portion of the chain corresponds to 222 to 239; it reads THVNEMSNPGRDYPLAML. Residues 240–260 traverse the membrane as a helical segment; that stretch reads LLMVAAICLSSVGGLSIAMVI. At 261–291 the chain is on the periplasmic side; it reads PGNEINLSAGVMQTFTVLMSHVAPEIEWTVR. Residues 292–312 traverse the membrane as a helical segment; it reads VISALLLLGVLAEIASWIVGP. Residues 313-335 lie on the Cytoplasmic side of the membrane; that stretch reads SRGMYVTAQKNLLPAAFAKMNKN. Residues 336-356 form a helical membrane-spanning segment; the sequence is GVPVTLVISQLVITSIALIIL. Residues 357-366 lie on the Periplasmic side of the membrane; that stretch reads TNTGGGNNMS. Residues 367 to 387 traverse the membrane as a helical segment; it reads FLIALALTVVIYLCAYFMLFI. Residues 388-412 lie on the Cytoplasmic side of the membrane; sequence GYIVLVLKHPDLKRTFNIPGGKGVK. A helical transmembrane segment spans residues 413-433; it reads LVVAIVGLLTSIMAFIVSFLP. The Periplasmic portion of the chain corresponds to 434-445; the sequence is PDNIQGDSTDMY. The helical transmembrane segment at 446–466 threads the bilayer; it reads VELLVVSFLVVLALPFILYAV. Residues 467-511 lie on the Cytoplasmic side of the membrane; the sequence is HDRKGKANTGVTLEPINSQNAPKGHFFLHPRARSPHYIVMNDKKH.

Belongs to the amino acid-polyamine-organocation (APC) superfamily. Glutamate:GABA antiporter (GGA) (TC 2.A.3.7) family.

It localises to the cell inner membrane. The catalysed reaction is 4-aminobutanoate(in) + L-glutamate(out) = 4-aminobutanoate(out) + L-glutamate(in). With respect to regulation, shows pH-dependent activity. The glutamate analog L-trans-pyrrolidine-2,4-dicarboxylic acid (L-PDC) blocks the uptake of glutamate by selective inhibition. Involved in glutaminase-dependent acid resistance. Exchanges extracellular glutamate (Glu) for intracellular gamma-aminobutyric acid (GABA) under acidic conditions. The ability to survive the extremely acidic conditions of the stomach is essential for successful colonization of the host by commensal and pathogenic bacteria. The sequence is that of Glutamate/gamma-aminobutyrate antiporter (gadC) from Escherichia coli O157:H7.